A 346-amino-acid polypeptide reads, in one-letter code: Holliday junction branch migration complex subunit RuvB (346 aa).

The large ATPase domain (RuvB-L) stretch occupies residues 1 to 183 (MTEQRIIASS…FGIVQRLEFY (183 aa)). Residues Ile-22, Arg-23, Gly-64, Lys-67, Thr-68, Thr-69, 130 to 132 (EDF), Arg-173, Tyr-183, and Arg-220 contribute to the ATP site. Thr-68 lines the Mg(2+) pocket. The segment at 184 to 254 (SPQELTRIVS…VAQAAMQMLK (71 aa)) is small ATPAse domain (RuvB-S). The interval 257–346 (PEGFDELDRR…PGIGEPGDLF (90 aa)) is head domain (RuvB-H). Positions 293, 312, and 317 each coordinate DNA.

Belongs to the RuvB family. In terms of assembly, homohexamer. Forms an RuvA(8)-RuvB(12)-Holliday junction (HJ) complex. HJ DNA is sandwiched between 2 RuvA tetramers; dsDNA enters through RuvA and exits via RuvB. An RuvB hexamer assembles on each DNA strand where it exits the tetramer. Each RuvB hexamer is contacted by two RuvA subunits (via domain III) on 2 adjacent RuvB subunits; this complex drives branch migration. In the full resolvosome a probable DNA-RuvA(4)-RuvB(12)-RuvC(2) complex forms which resolves the HJ.

The protein localises to the cytoplasm. It catalyses the reaction ATP + H2O = ADP + phosphate + H(+). Functionally, the RuvA-RuvB-RuvC complex processes Holliday junction (HJ) DNA during genetic recombination and DNA repair, while the RuvA-RuvB complex plays an important role in the rescue of blocked DNA replication forks via replication fork reversal (RFR). RuvA specifically binds to HJ cruciform DNA, conferring on it an open structure. The RuvB hexamer acts as an ATP-dependent pump, pulling dsDNA into and through the RuvAB complex. RuvB forms 2 homohexamers on either side of HJ DNA bound by 1 or 2 RuvA tetramers; 4 subunits per hexamer contact DNA at a time. Coordinated motions by a converter formed by DNA-disengaged RuvB subunits stimulates ATP hydrolysis and nucleotide exchange. Immobilization of the converter enables RuvB to convert the ATP-contained energy into a lever motion, pulling 2 nucleotides of DNA out of the RuvA tetramer per ATP hydrolyzed, thus driving DNA branch migration. The RuvB motors rotate together with the DNA substrate, which together with the progressing nucleotide cycle form the mechanistic basis for DNA recombination by continuous HJ branch migration. Branch migration allows RuvC to scan DNA until it finds its consensus sequence, where it cleaves and resolves cruciform DNA. This chain is Holliday junction branch migration complex subunit RuvB, found in Xanthomonas euvesicatoria pv. vesicatoria (strain 85-10) (Xanthomonas campestris pv. vesicatoria).